The sequence spans 301 residues: Protein FAM221A (301 aa).

The disordered stretch occupies residues 235–271; that stretch reads MHAPSTSSPQPLAGGNEVGPSTQLSSLRKPEEDDMAY.

Belongs to the FAM221 family.

The chain is Protein FAM221A (Fam221a) from Mus musculus (Mouse).